The following is a 104-amino-acid chain: Nucleoid-associated protein jk2011 (104 aa).

Belongs to the YbaB/EbfC family. Homodimer.

It is found in the cytoplasm. The protein resides in the nucleoid. Binds to DNA and alters its conformation. May be involved in regulation of gene expression, nucleoid organization and DNA protection. This chain is Nucleoid-associated protein jk2011, found in Corynebacterium jeikeium (strain K411).